The chain runs to 716 residues: DEAD-box ATP-dependent RNA helicase 31 (716 aa).

The segment at 99 to 188 (GILKSDDEDE…LRLEDESSDE (90 aa)) is disordered. Basic and acidic residues predominate over residues 110–121 (DRSRGRNQEKRG). Residues 144 to 153 (SRIQGKSSEA) are compositionally biased toward polar residues. The span at 155–188 (FRGRKETSFSRDREDEKGLRKREDLRLEDESSDE) shows a compositional bias: basic and acidic residues. Positions 248-276 (TRFDHYPLSPLSLKAIKDAGYETMTVVQE) match the Q motif motif. The region spanning 279 to 462 (LPIILKGKDV…LVALRRDHEF (184 aa)) is the Helicase ATP-binding domain. Position 292–299 (292–299 (AKTGTGKT)) interacts with ATP. Residues 410–413 (DEAD) carry the DEAD box motif. The Helicase C-terminal domain occupies 497–643 (LREHIMGNVD…IDPETVKKVQ (147 aa)).

Belongs to the DEAD box helicase family.

It catalyses the reaction ATP + H2O = ADP + phosphate + H(+). The sequence is that of DEAD-box ATP-dependent RNA helicase 31 (RH31) from Arabidopsis thaliana (Mouse-ear cress).